A 36-amino-acid chain; its full sequence is Mu/kappa-theraphotoxin-Ap1a (36 aa).

Disulfide bonds link C3-C18, C10-C23, and C17-C30. F36 carries the phenylalanine amide modification.

Belongs to the neurotoxin 10 (Hwtx-1) family. Expressed by the venom gland.

The protein localises to the secreted. Inhibitor of voltage-gated potassium and sodium channels. Among other potassium channels, it selectively inhibits Kv10.1/KCNH1/EAG1 (IC(50)=236 nM) by shifting the voltage dependence of channel activation in a depolarising direction, it shows a maximum inhibition of 80% at saturating concentrations, it shows fast on-rates, and is poorly reversible. It also slightly affects channel inactivation, when the membrane is highly depolarised (&gt;+80 mV). It shows similar potency on Nav1.7/SCN9A (IC(50)=222 nM) and lower potency on Nav1.2/SCN2A (IC(50)=519 nM). In Avicularia purpurea (Ecuadorian purple pinktoe tarantula), this protein is Mu/kappa-theraphotoxin-Ap1a.